The primary structure comprises 418 residues: Glycine betaine transport ATP-binding protein OpuAA (418 aa).

The region spanning 34-270 is the ABC transporter domain; the sequence is KTKKEILKAT…PSNEYVEKFV (237 aa). Residue 66 to 73 coordinates ATP; the sequence is GLSGSGKS. CBS domains follow at residues 284-340 and 344-403; these read IMKR…DLSL and LNTE…INAE.

Belongs to the ABC transporter superfamily. As to quaternary structure, the complex is composed of two ATP-binding proteins (OpuAA), two transmembrane proteins (OpuAB) and a solute-binding protein (OpuAC).

The enzyme catalyses a quaternary ammonium(out) + ATP + H2O = a quaternary ammonium(in) + ADP + phosphate + H(+). Its function is as follows. Involved in a multicomponent binding-protein-dependent transport system for glycine betaine. Probably responsible for energy coupling to the transport system. The protein is Glycine betaine transport ATP-binding protein OpuAA (opuAA) of Bacillus subtilis (strain 168).